The following is a 215-amino-acid chain: 16S rRNA (adenine(1408)-N(1))-methyltransferase (215 aa).

S-adenosyl-L-methionine is bound by residues G32, D55, 87–88, 102–107, and 191–193; these read AE, LMPWGS, and TSW.

This sequence belongs to the methyltransferase superfamily. Kanamycin-apramycin resistance family.

It catalyses the reaction adenosine(1408) in 16S rRNA + S-adenosyl-L-methionine = N(1)-methyladenosine(1408) in 16S rRNA + S-adenosyl-L-homocysteine + H(+). Functionally, specifically methylates the N(1) position of adenine 1408 in 16S rRNA. Confers resistance to various aminoglycosides, including kanamycin, neomycin and apramycin. In Streptoalloteichus tenebrarius (strain ATCC 17920 / DSM 40477 / JCM 4838 / CBS 697.72 / NBRC 16177 / NCIMB 11028 / NRRL B-12390 / A12253. 1 / ISP 5477) (Streptomyces tenebrarius), this protein is 16S rRNA (adenine(1408)-N(1))-methyltransferase (kamB).